The following is a 464-amino-acid chain: ATP synthase subunit beta (464 aa).

ATP is bound at residue 152 to 159 (GGAGVGKS).

It belongs to the ATPase alpha/beta chains family. F-type ATPases have 2 components, CF(1) - the catalytic core - and CF(0) - the membrane proton channel. CF(1) has five subunits: alpha(3), beta(3), gamma(1), delta(1), epsilon(1). CF(0) has three main subunits: a(1), b(2) and c(9-12). The alpha and beta chains form an alternating ring which encloses part of the gamma chain. CF(1) is attached to CF(0) by a central stalk formed by the gamma and epsilon chains, while a peripheral stalk is formed by the delta and b chains.

The protein localises to the cell membrane. The catalysed reaction is ATP + H2O + 4 H(+)(in) = ADP + phosphate + 5 H(+)(out). In terms of biological role, produces ATP from ADP in the presence of a proton gradient across the membrane. The catalytic sites are hosted primarily by the beta subunits. The chain is ATP synthase subunit beta from Protochlamydia amoebophila (strain UWE25).